We begin with the raw amino-acid sequence, 993 residues long: uncharacterized protein (993 aa).

A signal peptide spans 1 to 24 (MLLFKFNFTTAFLFTILAFAQARS). N-linked (GlcNAc...) asparagine glycans are attached at residues Asn7, Asn44, Asn89, Asn121, Asn138, Asn161, Asn169, Asn232, Asn361, Asn386, Asn393, Asn423, Asn447, Asn480, and Asn488. Residue Glu504 is part of the active site. Residues Asn545, Asn548, and Asn614 are each glycosylated (N-linked (GlcNAc...) asparagine). Asp672 (proton donor) is an active-site residue. 8 N-linked (GlcNAc...) asparagine glycosylation sites follow: Asn673, Asn814, Asn826, Asn835, Asn846, Asn910, Asn940, and Asn987.

This sequence belongs to the glycosyl hydrolase 31 family.

This is an uncharacterized protein from Schizosaccharomyces pombe (strain 972 / ATCC 24843) (Fission yeast).